We begin with the raw amino-acid sequence, 103 residues long: MATYAIVKTGGKQYKVAVGDLVKVEKIEGEPGTAVSLAPVLVVDGSDLTTDADKLAKISVTGEVVEHTKGPKIRIHKFKNKTGYHKRQGHRQKLTVLKVTGIK.

Belongs to the bacterial ribosomal protein bL21 family. Part of the 50S ribosomal subunit. Contacts protein L20.

In terms of biological role, this protein binds to 23S rRNA in the presence of protein L20. The protein is Large ribosomal subunit protein bL21 of Rhodococcus jostii (strain RHA1).